Reading from the N-terminus, the 427-residue chain is Peptidase B (427 aa).

Positions 195 and 200 each coordinate Mn(2+). Residue K207 is part of the active site. Positions 218, 277, and 279 each coordinate Mn(2+). R281 is a catalytic residue.

It belongs to the peptidase M17 family. Homohexamer. It depends on Mn(2+) as a cofactor.

It localises to the cytoplasm. The catalysed reaction is Release of an N-terminal amino acid, Xaa, from a peptide or arylamide. Xaa is preferably Glu or Asp but may be other amino acids, including Leu, Met, His, Cys and Gln.. In terms of biological role, probably plays an important role in intracellular peptide degradation. This chain is Peptidase B, found in Shigella dysenteriae serotype 1 (strain Sd197).